The chain runs to 143 residues: Large ribosomal subunit protein uL13c (143 aa).

The protein belongs to the universal ribosomal protein uL13 family. In terms of assembly, part of the 50S ribosomal subunit.

It localises to the plastid. The protein resides in the chloroplast. The chain is Large ribosomal subunit protein uL13c from Guillardia theta (Cryptophyte).